Here is a 92-residue protein sequence, read N- to C-terminus: Small ribosomal subunit protein uS19c (92 aa).

This sequence belongs to the universal ribosomal protein uS19 family.

The protein localises to the plastid. The protein resides in the chloroplast. Protein S19 forms a complex with S13 that binds strongly to the 16S ribosomal RNA. The polypeptide is Small ribosomal subunit protein uS19c (Coffea arabica (Arabian coffee)).